Consider the following 177-residue polypeptide: uncharacterized protein (177 aa).

This is an uncharacterized protein from Acanthamoeba polyphaga mimivirus (APMV).